Reading from the N-terminus, the 452-residue chain is Xaa-Pro dipeptidase 1 (452 aa).

The Mn(2+) site is built by Asp247, Asp258, His338, Glu383, and Glu422.

It belongs to the peptidase M24B family. Bacterial-type prolidase subfamily. It depends on Mn(2+) as a cofactor.

It catalyses the reaction Xaa-L-Pro dipeptide + H2O = an L-alpha-amino acid + L-proline. In terms of biological role, splits dipeptides with a prolyl residue in the C-terminal position. The polypeptide is Xaa-Pro dipeptidase 1 (Idiomarina loihiensis (strain ATCC BAA-735 / DSM 15497 / L2-TR)).